Reading from the N-terminus, the 212-residue chain is Proteasome subunit beta 2 (212 aa).

Positions 1-15 (MLHHPGTGQLRALKG) are cleaved as a propeptide — removed in mature form; by autocatalysis. T16 functions as the Nucleophile in the catalytic mechanism.

The protein belongs to the peptidase T1B family. The 20S proteasome core is composed of 14 alpha and 14 beta subunits that assemble into four stacked heptameric rings, resulting in a barrel-shaped structure. The two inner rings, each composed of seven catalytic beta subunits, are sandwiched by two outer rings, each composed of seven alpha subunits. The catalytic chamber with the active sites is on the inside of the barrel. Has a gated structure, the ends of the cylinder being occluded by the N-termini of the alpha-subunits. Is capped at one or both ends by the proteasome regulatory ATPase, PAN.

It localises to the cytoplasm. The enzyme catalyses Cleavage of peptide bonds with very broad specificity.. Its activity is regulated as follows. The formation of the proteasomal ATPase PAN-20S proteasome complex, via the docking of the C-termini of PAN into the intersubunit pockets in the alpha-rings, triggers opening of the gate for substrate entry. Interconversion between the open-gate and close-gate conformations leads to a dynamic regulation of the 20S proteasome proteolysis activity. Functionally, component of the proteasome core, a large protease complex with broad specificity involved in protein degradation. The sequence is that of Proteasome subunit beta 2 from Hyperthermus butylicus (strain DSM 5456 / JCM 9403 / PLM1-5).